Reading from the N-terminus, the 273-residue chain is Large ribosomal subunit protein uL2 (273 aa).

2 disordered regions span residues 35 to 54 (DSKS…TRHI) and 222 to 273 (GMAM…RRNK). The span at 39 to 49 (KSGGRNNNGRI) shows a compositional bias: polar residues. Residues 229-239 (DHPHGGGEGRN) are compositionally biased toward basic and acidic residues. A compositionally biased stretch (basic residues) spans 253–273 (KGFKTRKNKRTDKYIVRRRNK).

This sequence belongs to the universal ribosomal protein uL2 family. As to quaternary structure, part of the 50S ribosomal subunit. Forms a bridge to the 30S subunit in the 70S ribosome.

Functionally, one of the primary rRNA binding proteins. Required for association of the 30S and 50S subunits to form the 70S ribosome, for tRNA binding and peptide bond formation. It has been suggested to have peptidyltransferase activity; this is somewhat controversial. Makes several contacts with the 16S rRNA in the 70S ribosome. The chain is Large ribosomal subunit protein uL2 from Aeromonas salmonicida (strain A449).